A 365-amino-acid chain; its full sequence is Chorismate synthase (365 aa).

Position 46 (arginine 46) interacts with NADP(+). Residues 123–125 (RSS), 241–242 (NG), glycine 281, 296–300 (KPTPS), and arginine 322 contribute to the FMN site.

The protein belongs to the chorismate synthase family. Homotetramer. It depends on FMNH2 as a cofactor.

The catalysed reaction is 5-O-(1-carboxyvinyl)-3-phosphoshikimate = chorismate + phosphate. It participates in metabolic intermediate biosynthesis; chorismate biosynthesis; chorismate from D-erythrose 4-phosphate and phosphoenolpyruvate: step 7/7. Catalyzes the anti-1,4-elimination of the C-3 phosphate and the C-6 proR hydrogen from 5-enolpyruvylshikimate-3-phosphate (EPSP) to yield chorismate, which is the branch point compound that serves as the starting substrate for the three terminal pathways of aromatic amino acid biosynthesis. This reaction introduces a second double bond into the aromatic ring system. The chain is Chorismate synthase from Helicobacter pylori (strain ATCC 700392 / 26695) (Campylobacter pylori).